Consider the following 72-residue polypeptide: Translation initiation factor IF-1 (72 aa).

Residues Met1–Lys72 enclose the S1-like domain.

This sequence belongs to the IF-1 family. As to quaternary structure, component of the 30S ribosomal translation pre-initiation complex which assembles on the 30S ribosome in the order IF-2 and IF-3, IF-1 and N-formylmethionyl-tRNA(fMet); mRNA recruitment can occur at any time during PIC assembly.

Its subcellular location is the cytoplasm. One of the essential components for the initiation of protein synthesis. Stabilizes the binding of IF-2 and IF-3 on the 30S subunit to which N-formylmethionyl-tRNA(fMet) subsequently binds. Helps modulate mRNA selection, yielding the 30S pre-initiation complex (PIC). Upon addition of the 50S ribosomal subunit IF-1, IF-2 and IF-3 are released leaving the mature 70S translation initiation complex. In Lacticaseibacillus paracasei (strain ATCC 334 / BCRC 17002 / CCUG 31169 / CIP 107868 / KCTC 3260 / NRRL B-441) (Lactobacillus paracasei), this protein is Translation initiation factor IF-1.